Reading from the N-terminus, the 382-residue chain is Succinate--CoA ligase [ADP-forming] subunit beta (382 aa).

The ATP-grasp domain maps to 9 to 240; the sequence is KELFAKYGVK…PRDITEFEAY (232 aa). Residues lysine 45, 52–54, leucine 94, and glutamate 99 each bind ATP; that span reads GRG. Residues asparagine 193 and aspartate 207 each coordinate Mg(2+). Residues asparagine 260 and 317–319 each bind substrate; that span reads GIT.

The protein belongs to the succinate/malate CoA ligase beta subunit family. In terms of assembly, heterotetramer of two alpha and two beta subunits. The cofactor is Mg(2+).

The catalysed reaction is succinate + ATP + CoA = succinyl-CoA + ADP + phosphate. The enzyme catalyses GTP + succinate + CoA = succinyl-CoA + GDP + phosphate. Its pathway is carbohydrate metabolism; tricarboxylic acid cycle; succinate from succinyl-CoA (ligase route): step 1/1. Functionally, succinyl-CoA synthetase functions in the citric acid cycle (TCA), coupling the hydrolysis of succinyl-CoA to the synthesis of either ATP or GTP and thus represents the only step of substrate-level phosphorylation in the TCA. The beta subunit provides nucleotide specificity of the enzyme and binds the substrate succinate, while the binding sites for coenzyme A and phosphate are found in the alpha subunit. In Pyrobaculum calidifontis (strain DSM 21063 / JCM 11548 / VA1), this protein is Succinate--CoA ligase [ADP-forming] subunit beta.